A 922-amino-acid polypeptide reads, in one-letter code: Isoleucine--tRNA ligase (922 aa).

The 'HIGH' region signature appears at Pro58–His68. Glu552 contributes to the L-isoleucyl-5'-AMP binding site. Residues Lys593 to Ser597 carry the 'KMSKS' region motif. Lys596 contacts ATP. Zn(2+) contacts are provided by Cys885, Cys888, Cys905, and Cys908.

Belongs to the class-I aminoacyl-tRNA synthetase family. IleS type 1 subfamily. In terms of assembly, monomer. Requires Zn(2+) as cofactor.

The protein localises to the cytoplasm. The enzyme catalyses tRNA(Ile) + L-isoleucine + ATP = L-isoleucyl-tRNA(Ile) + AMP + diphosphate. Catalyzes the attachment of isoleucine to tRNA(Ile). As IleRS can inadvertently accommodate and process structurally similar amino acids such as valine, to avoid such errors it has two additional distinct tRNA(Ile)-dependent editing activities. One activity is designated as 'pretransfer' editing and involves the hydrolysis of activated Val-AMP. The other activity is designated 'posttransfer' editing and involves deacylation of mischarged Val-tRNA(Ile). In Ruthia magnifica subsp. Calyptogena magnifica, this protein is Isoleucine--tRNA ligase.